A 625-amino-acid polypeptide reads, in one-letter code: UvrABC system protein C (625 aa).

A GIY-YIG domain is found at 26–105 (LEPGVYFLRD…IKQHQPHFNT (80 aa)). The 36-residue stretch at 215–250 (GELLEKLATKMLAASENLDFEQAATIRDQIRGLQAL) folds into the UVR domain.

It belongs to the UvrC family. As to quaternary structure, interacts with UvrB in an incision complex.

It localises to the cytoplasm. In terms of biological role, the UvrABC repair system catalyzes the recognition and processing of DNA lesions. UvrC both incises the 5' and 3' sides of the lesion. The N-terminal half is responsible for the 3' incision and the C-terminal half is responsible for the 5' incision. In Microcystis aeruginosa (strain NIES-843 / IAM M-2473), this protein is UvrABC system protein C.